The chain runs to 500 residues: Sulfate adenylyltransferase (500 aa).

The tract at residues 1-165 (MLSPHGGILQ…LEAIQLPAHY (165 aa)) is N-terminal. Positions 166–390 (DYLNLRKSPA…LRQYNPPRYR (225 aa)) are catalytic. Gln-193 is a binding site for sulfate. ATP-binding positions include 193 to 196 (QTRN) and 287 to 290 (GRDH). Catalysis depends on residues Thr-194, Arg-195, and Asn-196. Arg-195 provides a ligand contact to sulfate. Ala-291 lines the sulfate pocket. An ATP-binding site is contributed by Ile-329. Residues 391–500 (QGFVIVVNHE…FLEDNKFFQF (110 aa)) are required for oligomerization; adenylyl-sulfate kinase-like.

This sequence belongs to the sulfate adenylyltransferase family. As to quaternary structure, homohexamer. Dimer of trimers.

The protein resides in the cytoplasm. The enzyme catalyses sulfate + ATP + H(+) = adenosine 5'-phosphosulfate + diphosphate. The protein operates within sulfur metabolism; hydrogen sulfide biosynthesis; sulfite from sulfate: step 1/3. Catalyzes the first intracellular reaction of sulfate assimilation, forming adenosine-5'-phosphosulfate (APS) from inorganic sulfate and ATP. Plays an important role in sulfate activation as a component of the biosynthesis pathway of sulfur-containing amino acids. The chain is Sulfate adenylyltransferase from Eremothecium gossypii (strain ATCC 10895 / CBS 109.51 / FGSC 9923 / NRRL Y-1056) (Yeast).